The following is a 490-amino-acid chain: Velvet complex subunit 2 (490 aa).

Disordered regions lie at residues 23-148 (LYHH…ESQQ) and 295-316 (YQTQPTYSQGSSAYPSNGTYGP). Positions 54–70 (PPSHHFQLHPGHGHHQQ) are enriched in basic residues. Basic and acidic residues predominate over residues 112–131 (AAEHRDHPQHALDEPSRSHD). Residues 164–474 (ATGRRYHLDV…AAQGIKIPIR (311 aa)) form the Velvet domain. Positions 295 to 313 (YQTQPTYSQGSSAYPSNGT) are enriched in polar residues.

Belongs to the velvet family. VelB subfamily. Component of the heterotrimeric velvet complex composed of LAE1, VEL1 and VEL2; VEL1 acting as a bridging protein between LAE1 and VEL2. Forms a heterodimeric complex with VOS1; the formation of the VEL2-VOS1 complex is light-dependent.

It localises to the nucleus. It is found in the cytoplasm. Its function is as follows. Component of the velvet transcription factor complex that controls sexual/asexual developmental ratio in response to light, promoting sexual development in the darkness while stimulating asexual sporulation under illumination. The velvet complex acts as a global regulator for secondary metabolite gene expression. Component of the VEL2-VOS1 heterodimeric complex that plays a dual role in activating genes associated with spore maturation and repressing certain development-associated genes. The VEL2-VOS1 complex binds DNA through the DNA-binding domain of VOS1 that recognizes an 11-nucleotide consensus sequence 5'-CTGGCCGCGGC-3' consisting of two motifs in the promoters of key developmental regulatory genes. Regulates expression of cellulase-encoding genes such as the cellobiohydrolase-encoding genes cbh1 and cbh2, the endo-beta-1,4-glucanase-encoding genes egl1 and egl2, and the beta-glucosidase-encoding gene bgl1. This chain is Velvet complex subunit 2, found in Hypocrea jecorina (strain QM6a) (Trichoderma reesei).